A 312-amino-acid chain; its full sequence is Ornithine carbamoyltransferase (312 aa).

Residues 57 to 60, Q84, R108, and 135 to 138 each bind carbamoyl phosphate; these read STRT and HPCQ. L-ornithine-binding positions include N166, D226, and 230 to 231; that span reads SM. Carbamoyl phosphate-binding positions include 265–266 and R293; that span reads CL.

Belongs to the aspartate/ornithine carbamoyltransferase superfamily. OTCase family.

Its subcellular location is the cytoplasm. It catalyses the reaction carbamoyl phosphate + L-ornithine = L-citrulline + phosphate + H(+). The protein operates within amino-acid degradation; L-arginine degradation via ADI pathway; carbamoyl phosphate from L-arginine: step 2/2. Its function is as follows. Reversibly catalyzes the transfer of the carbamoyl group from carbamoyl phosphate (CP) to the N(epsilon) atom of ornithine (ORN) to produce L-citrulline. This is Ornithine carbamoyltransferase from Brucella abortus (strain 2308).